The sequence spans 385 residues: GTPase Obg (385 aa).

The 159-residue stretch at 1-159 (MKFVDEATIL…REIQLELMLL (159 aa)) folds into the Obg domain. Positions 160-333 (ADVGMLGLPN…LCWDVMAFIN (174 aa)) constitute an OBG-type G domain. GTP contacts are provided by residues 166 to 173 (GLPNAGKS), 191 to 195 (FTTLV), 213 to 216 (DIPG), 283 to 286 (NKAD), and 314 to 316 (SAA). Residues Ser-173 and Thr-193 each contribute to the Mg(2+) site. A compositionally biased stretch (acidic residues) spans 362–379 (QQEEAEETLDDDWDEDGV). A disordered region spans residues 362 to 385 (QQEEAEETLDDDWDEDGVETIYQR).

Belongs to the TRAFAC class OBG-HflX-like GTPase superfamily. OBG GTPase family. In terms of assembly, monomer. The cofactor is Mg(2+).

It localises to the cytoplasm. Its function is as follows. An essential GTPase which binds GTP, GDP and possibly (p)ppGpp with moderate affinity, with high nucleotide exchange rates and a fairly low GTP hydrolysis rate. Plays a role in control of the cell cycle, stress response, ribosome biogenesis and in those bacteria that undergo differentiation, in morphogenesis control. The chain is GTPase Obg from Sodalis glossinidius (strain morsitans).